Reading from the N-terminus, the 351-residue chain is UDP-3-O-acylglucosamine N-acyltransferase (351 aa).

Histidine 240 functions as the Proton acceptor in the catalytic mechanism.

Belongs to the transferase hexapeptide repeat family. LpxD subfamily. Homotrimer.

The catalysed reaction is a UDP-3-O-[(3R)-3-hydroxyacyl]-alpha-D-glucosamine + a (3R)-hydroxyacyl-[ACP] = a UDP-2-N,3-O-bis[(3R)-3-hydroxyacyl]-alpha-D-glucosamine + holo-[ACP] + H(+). The protein operates within bacterial outer membrane biogenesis; LPS lipid A biosynthesis. Catalyzes the N-acylation of UDP-3-O-acylglucosamine using 3-hydroxyacyl-ACP as the acyl donor. Is involved in the biosynthesis of lipid A, a phosphorylated glycolipid that anchors the lipopolysaccharide to the outer membrane of the cell. The protein is UDP-3-O-acylglucosamine N-acyltransferase of Ectopseudomonas mendocina (strain ymp) (Pseudomonas mendocina).